Here is a 263-residue protein sequence, read N- to C-terminus: Adaptin ear-binding coat-associated protein 2 (263 aa).

Disordered regions lie at residues 166–194 (KKKEGAAGNPRVRPASTGGLSLLPPPPGG) and 219–263 (APSS…WVQF). Serine 181 carries the post-translational modification Phosphoserine. Short sequence motifs (WXXF motif) lie at residues 240–243 (WGDF) and 260–263 (WVQF). Residues 246–263 (STGSTSSQTQPGTGWVQF) are compositionally biased toward low complexity.

The protein belongs to the NECAP family. In terms of assembly, interacts with AP1G1 and AP2A1 components of the adapter protein complexes AP-1 and AP-2. Interacts with the GAE domain proteins GGA1, GGA2 and GGA3.

It is found in the cytoplasmic vesicle. The protein resides in the clathrin-coated vesicle membrane. Its subcellular location is the cell membrane. In terms of biological role, involved in endocytosis. This chain is Adaptin ear-binding coat-associated protein 2 (NECAP2), found in Homo sapiens (Human).